Consider the following 864-residue polypeptide: Carbohydrate-responsive element-binding protein (864 aa).

Disordered regions lie at residues 15 to 41 and 53 to 77; these read PRVV…AGGL and MVSS…LADF. Phosphoserine is present on residues serine 20, serine 23, and serine 25. Threonine 27 carries the phosphothreonine modification. Serine 196 is subject to Phosphoserine. Disordered stretches follow at residues 332 to 397, 449 to 468, 489 to 533, 547 to 570, and 583 to 602; these read SSGI…APGP, PGVS…QPGP, PHFT…TARD, PEQA…PQDT, and PIPA…LAPP. Residues 351–368 are compositionally biased toward polar residues; it reads GMTPHSGNTRLQARNSCS. Low complexity predominate over residues 513–531; that stretch reads ASPPTLASATASPTATATA. At serine 566 the chain carries Phosphoserine; by AMPK. Positions 583–596 are enriched in pro residues; it reads PIPAPTPPRPPPGP. Serine 614, serine 626, and serine 643 each carry phosphoserine. The region spanning 661-715 is the bHLH domain; the sequence is NRRITHISAEQKRRFNIKLGFDTLHGLVSTLSAQPSLKVSKATTLQKTAEYILML. The segment at 715–736 is leucine-zipper; it reads LQQERAAMQEEAQQLRDEIEEL.

Binds DNA as a heterodimer with TCFL4/MLX. In terms of processing, phosphorylation at Ser-566 by AMPK inactivates the DNA-binding activity. In terms of tissue distribution, expressed in the ventricular and intermediate zones of the developing spinal cord of 12.5 dpc embryos. In later embryos expressed in a variety of tissues.

Its subcellular location is the nucleus. Its function is as follows. Transcriptional repressor. Binds to the canonical and non-canonical E box sequences 5'-CACGTG-3'. This chain is Carbohydrate-responsive element-binding protein (Mlxipl), found in Mus musculus (Mouse).